The primary structure comprises 158 residues: Snaclec coagulation factor X-activating enzyme light chain 2 (158 aa).

A signal peptide spans 1–24 (MGRFISVSFGLLVVFLSLSGTGAG). 3 cysteine pairs are disulfide-bonded: C27/C38, C55/C152, and C127/C144. The region spanning 34–153 (YRYFCYRVFK…CEERYLFVCK (120 aa)) is the C-type lectin domain. An N-linked (GlcNAc...) (complex) asparagine glycan is attached at N82.

It belongs to the snaclec family. In terms of assembly, heterotrimer; disulfide-linked. The heterotrimer consists of 1 heavy chain (a metalloproteinase) and 2 light chains: LC1 and LC2. Post-translationally, N-glycosylated; probably required for conformation. Removal of easily accessible sugars does not change its functional capacity, but removal of the core sugars with N-glycanase causes a virtually complete loss of enzyme activity, apparently as a result of major conformational changes in the molecule. Not O-glycosylated. In terms of tissue distribution, expressed by the venom gland.

It localises to the secreted. Functionally, regulatory subunit of the blood coagulation factor X- and IX-activating enzyme. The enzyme activates coagulation factor X (F10) by cleaving the Arg-Ile bond and is also able to activate coagulation factor IX (F9) and protein S (PROS1) by specific cleavage of Arg-Ile and Arg-Val bonds. May serve as an exosite by which the enzyme recognizes and binds to the Gla domain of factor X (F10) and factor IX (F9) in a calcium-dependent manner. The sequence is that of Snaclec coagulation factor X-activating enzyme light chain 2 (LC2) from Daboia siamensis (Eastern Russel's viper).